Here is a 341-residue protein sequence, read N- to C-terminus: L-threonine 3-dehydrogenase (341 aa).

Zn(2+) is bound at residue Cys38. Residues Thr40 and His43 each act as charge relay system in the active site. The Zn(2+) site is built by His63, Glu64, Cys93, Cys96, Cys99, and Cys107. NAD(+) is bound by residues Ile175, Asp195, Arg200, 262-264 (LGI), and 286-287 (IY).

The protein belongs to the zinc-containing alcohol dehydrogenase family. In terms of assembly, homotetramer. Zn(2+) serves as cofactor.

The protein resides in the cytoplasm. It catalyses the reaction L-threonine + NAD(+) = (2S)-2-amino-3-oxobutanoate + NADH + H(+). It participates in amino-acid degradation; L-threonine degradation via oxydo-reductase pathway; glycine from L-threonine: step 1/2. Functionally, catalyzes the NAD(+)-dependent oxidation of L-threonine to 2-amino-3-ketobutyrate. This is L-threonine 3-dehydrogenase from Serratia proteamaculans (strain 568).